The following is a 471-amino-acid chain: 3-isopropylmalate dehydratase large subunit (471 aa).

[4Fe-4S] cluster contacts are provided by Cys347, Cys407, and Cys410.

This sequence belongs to the aconitase/IPM isomerase family. LeuC type 1 subfamily. In terms of assembly, heterodimer of LeuC and LeuD. [4Fe-4S] cluster is required as a cofactor.

It carries out the reaction (2R,3S)-3-isopropylmalate = (2S)-2-isopropylmalate. Its pathway is amino-acid biosynthesis; L-leucine biosynthesis; L-leucine from 3-methyl-2-oxobutanoate: step 2/4. Its function is as follows. Catalyzes the isomerization between 2-isopropylmalate and 3-isopropylmalate, via the formation of 2-isopropylmaleate. This chain is 3-isopropylmalate dehydratase large subunit, found in Vibrio parahaemolyticus serotype O3:K6 (strain RIMD 2210633).